The chain runs to 78 residues: Mu-conotoxin BuIIIB (78 aa).

Residues 1-22 (MMSKLGVLLTICLLLFPLFALP) form the signal peptide. Residues 23–51 (QDGDQPADRPAERMQDDISSEQNPLLEKR) constitute a propeptide that is removed on maturation. The segment at 26 to 46 (DQPADRPAERMQDDISSEQNP) is disordered. Positions 28 to 38 (PADRPAERMQD) are enriched in basic and acidic residues. Cystine bridges form between C56–C68, C57–C74, and C64–C75. Position 75 is a cysteine amide (C75).

This sequence belongs to the conotoxin M superfamily. As to expression, expressed by the venom duct.

The protein resides in the secreted. Its function is as follows. Mu-conotoxins block voltage-gated sodium channels (Nav). This synthetic toxin potently blocks rNav1.4/SCN4A (Kd=0.34-3.6 nM), rNav1.2/SCN2A (Kd=13 nM), rNav1.3/SCN3A (Kd=200 nM), rNav1.1/SCN1A (Kd=360 nM), mNav1.6/SCN8A (IC(50)=1.8 uM), rNav1.5/SCN5A (IC(50)=9 uM), rNav1.6/SCN8A (IC(50)&gt;30 uM). It is noteworthy that the toxin is 50-fold more potent on mouse Nav1.6 than on rat Nav1.6. The block of SCN4A is very slowly reversible. This Conus bullatus (Bubble cone) protein is Mu-conotoxin BuIIIB.